The sequence spans 313 residues: Ribosomal RNA small subunit methyltransferase H (313 aa).

Residues 36–38, Asp56, Phe80, Asp102, and Gln109 contribute to the S-adenosyl-L-methionine site; that span reads GGH.

It belongs to the methyltransferase superfamily. RsmH family.

It is found in the cytoplasm. It carries out the reaction cytidine(1402) in 16S rRNA + S-adenosyl-L-methionine = N(4)-methylcytidine(1402) in 16S rRNA + S-adenosyl-L-homocysteine + H(+). Functionally, specifically methylates the N4 position of cytidine in position 1402 (C1402) of 16S rRNA. This Haemophilus ducreyi (strain 35000HP / ATCC 700724) protein is Ribosomal RNA small subunit methyltransferase H.